The primary structure comprises 343 residues: tRNA N6-adenosine threonylcarbamoyltransferase (343 aa).

Fe cation is bound by residues His120 and His124. Residues 142–146 (VVSGG), Asp175, Gly188, Asp192, and Asn281 each bind substrate. Residue Asp309 coordinates Fe cation.

The protein belongs to the KAE1 / TsaD family. It depends on Fe(2+) as a cofactor.

It localises to the cytoplasm. The catalysed reaction is L-threonylcarbamoyladenylate + adenosine(37) in tRNA = N(6)-L-threonylcarbamoyladenosine(37) in tRNA + AMP + H(+). In terms of biological role, required for the formation of a threonylcarbamoyl group on adenosine at position 37 (t(6)A37) in tRNAs that read codons beginning with adenine. Is involved in the transfer of the threonylcarbamoyl moiety of threonylcarbamoyl-AMP (TC-AMP) to the N6 group of A37, together with TsaE and TsaB. TsaD likely plays a direct catalytic role in this reaction. The sequence is that of tRNA N6-adenosine threonylcarbamoyltransferase from Halalkalibacterium halodurans (strain ATCC BAA-125 / DSM 18197 / FERM 7344 / JCM 9153 / C-125) (Bacillus halodurans).